The primary structure comprises 872 residues: Alanine--tRNA ligase (872 aa).

Residues His-567, His-571, Cys-669, and His-673 each contribute to the Zn(2+) site.

The protein belongs to the class-II aminoacyl-tRNA synthetase family. The cofactor is Zn(2+).

The protein localises to the cytoplasm. The catalysed reaction is tRNA(Ala) + L-alanine + ATP = L-alanyl-tRNA(Ala) + AMP + diphosphate. Catalyzes the attachment of alanine to tRNA(Ala) in a two-step reaction: alanine is first activated by ATP to form Ala-AMP and then transferred to the acceptor end of tRNA(Ala). Also edits incorrectly charged Ser-tRNA(Ala) and Gly-tRNA(Ala) via its editing domain. This chain is Alanine--tRNA ligase, found in Streptococcus suis (strain 98HAH33).